Here is a 511-residue protein sequence, read N- to C-terminus: Maturase K (511 aa).

It belongs to the intron maturase 2 family. MatK subfamily.

Its subcellular location is the plastid. It is found in the chloroplast. Usually encoded in the trnK tRNA gene intron. Probably assists in splicing its own and other chloroplast group II introns. The chain is Maturase K from Lolium perenne (Perennial ryegrass).